A 330-amino-acid polypeptide reads, in one-letter code: Exostosin-like 2 (330 aa).

Over 1–22 (MRCCHICKLPGRVMGIRVLRLS) the chain is Cytoplasmic. A helical; Signal-anchor for type II membrane protein transmembrane segment spans residues 23–43 (LVVILVLLLVAGALTALLPSV). The Lumenal portion of the chain corresponds to 44-330 (KEDKMLMLRR…FPYANYKRKI (287 aa)). Residue glutamine 71 participates in UDP-N-acetyl-alpha-D-galactosamine binding. Glutamine 71 provides a ligand contact to UDP-N-acetyl-alpha-D-glucosamine. A glycan (N-linked (GlcNAc...) asparagine) is linked at asparagine 74. UDP-N-acetyl-alpha-D-galactosamine-binding residues include arginine 75, asparagine 100, asparagine 129, arginine 134, aspartate 150, aspartate 151, aspartate 152, and aspartate 244. Residues arginine 75, asparagine 100, asparagine 129, arginine 134, aspartate 150, aspartate 151, aspartate 152, aspartate 244, aspartate 245, and arginine 293 each contribute to the UDP-N-acetyl-alpha-D-glucosamine site. Position 152 (aspartate 152) interacts with Mn(2+). Cysteine 243 and cysteine 296 are disulfide-bonded. Aspartate 245 is an active-site residue. Arginine 293 lines the UDP-N-acetyl-alpha-D-galactosamine pocket.

Belongs to the glycosyltransferase 47 family. Requires Mn(2+) as cofactor. The soluble form derives from the membrane form by proteolytic processing. As to expression, ubiquitous.

The protein localises to the endoplasmic reticulum membrane. It is found in the secreted. It catalyses the reaction 3-O-(beta-D-GlcA-(1-&gt;3)-beta-D-Gal-(1-&gt;3)-beta-D-Gal-(1-&gt;4)-beta-D-Xyl)-L-seryl-[protein] + UDP-N-acetyl-alpha-D-glucosamine = 3-O-(alpha-D-GlcNAc-(1-&gt;4)-beta-D-GlcA-(1-&gt;3)-beta-D-Gal-(1-&gt;3)-beta-D-Gal-(1-&gt;4)-beta-D-Xyl)-L-seryl-[protein] + UDP + H(+). The protein operates within glycan metabolism; heparan sulfate biosynthesis. Functionally, glycosyltransferase required for the biosynthesis of heparan-sulfate and responsible for the alternating addition of beta-1-4-linked glucuronic acid (GlcA) and alpha-1-4-linked N-acetylglucosamine (GlcNAc) units to nascent heparan sulfate chains. The sequence is that of Exostosin-like 2 (EXTL2) from Homo sapiens (Human).